A 176-amino-acid chain; its full sequence is Urease accessory protein UreE (176 aa).

The protein belongs to the UreE family.

The protein localises to the cytoplasm. Functionally, involved in urease metallocenter assembly. Binds nickel. Probably functions as a nickel donor during metallocenter assembly. The polypeptide is Urease accessory protein UreE (Helicobacter bizzozeronii).